Consider the following 126-residue polypeptide: Fatty acid-binding protein, liver (126 aa).

Ala-2 carries the N-acetylalanine modification.

It belongs to the calycin superfamily. Fatty-acid binding protein (FABP) family.

It is found in the cytoplasm. Functionally, binds free fatty acids and their coenzyme A derivatives, bilirubin, and some other small molecules in the cytoplasm. May be involved in intracellular lipid transport. This Schroederichthys bivius (Narrowmouthed catshark) protein is Fatty acid-binding protein, liver (fabp1).